Here is a 195-residue protein sequence, read N- to C-terminus: COMM domain-containing protein 3 (195 aa).

A COMM domain is found at 124–193 (HITDVSWRLE…DASKSLERAT (70 aa)).

The protein belongs to the COMM domain-containing protein 3 family. As to quaternary structure, component of the commander complex consisting of the CCC subcomplex and the retriever subcomplex. Component of the CCC (COMMD/CCDC22/CCDC93) subcomplex consisting of COMMD1, COMMD2, COMMD3, COMMD4, COMMD5, COMMD6, COMMD7, COMMD8, COMMD9, COMMD10, CCDC22 and CCDC93; within the complex forms a heterodimer with COMMD2. Interacts with NFKB1/p105. Interacts with CCDC22, CCDC93, SCNN1B, CUL3, CUL4A, CUL4B, CUL5. Widely expressed with highest expression in thymus.

It localises to the cytoplasm. The protein resides in the nucleus. Scaffold protein in the commander complex that is essential for endosomal recycling of transmembrane cargos; the commander complex is composed of the CCC subcomplex and the retriever subcomplex. May modulate activity of cullin-RING E3 ubiquitin ligase (CRL) complexes. May down-regulate activation of NF-kappa-B. Modulates Na(+) transport in epithelial cells by regulation of apical cell surface expression of amiloride-sensitive sodium channel (ENaC) subunits. This chain is COMM domain-containing protein 3 (COMMD3), found in Homo sapiens (Human).